A 94-amino-acid polypeptide reads, in one-letter code: Cell division protein CrgA (94 aa).

Helical transmembrane passes span 31-51 (VWFV…LLVF) and 71-91 (LGPW…LLTM).

It belongs to the CrgA family.

It is found in the cell membrane. Involved in cell division. The polypeptide is Cell division protein CrgA (Mycobacterium sp. (strain JLS)).